The chain runs to 249 residues: MEWTDDGIILGTRRHGEANAIVELLTRSHGRHLGLVRGGAGTRMRPLLQPGNSVGAVWRARLDEHLGYYALEGTRLRAATMLSYSHAAYGITHLAALARLLPERAPHDGIYEQFEAILEDFDDPVIAATHVVRFEMAMLEELGFGLDLSCCAATGTHTDLIYVSPKSGCAVSRSAGEPWRERLLPLPAFLRAGNEESSPDGEADIMEGFRLTGMFLLRNVLEPRGQAHSDARAGFIAAVARSRVTLAAE.

Belongs to the RecO family.

Functionally, involved in DNA repair and RecF pathway recombination. The chain is DNA repair protein RecO from Afipia carboxidovorans (strain ATCC 49405 / DSM 1227 / KCTC 32145 / OM5) (Oligotropha carboxidovorans).